The chain runs to 666 residues: Protein scarlet (666 aa).

Over 1 to 417 (MSDSDSKRID…TIQWLRFIQK (417 aa)) the chain is Cytoplasmic. Positions 26-55 (PVGSTIEVPSLDSTPKLSKRNSSERSLPLR) are disordered. In terms of domain architecture, ABC transporter spans 69-316 (LVWRDLCVYT…FANHGYYCPE (248 aa)). 108 to 115 (GSSGSGKT) serves as a coordination point for ATP. Residues 418–438 (IAMAFIIGACFAGTTEPSQLG) form a helical membrane-spanning segment. Residues 439 to 444 (VQAVQG) are Extracellular-facing. The helical transmembrane segment at 445-465 (ALFIMISENTYHPMYSVLNLF) threads the bilayer. Topologically, residues 466–490 (PQGFPLFMRETRSGLYSTGQYYAAN) are cytoplasmic. Residues 491–511 (ILALLPGMIIEPLIFVIICYW) form a helical membrane-spanning segment. Topologically, residues 512 to 518 (LTGLRST) are extracellular. A helical membrane pass occupies residues 519 to 539 (FYAFGVTAMCVVLVMNVATAC). Residues 540–551 (GCFFSTAFNSVP) lie on the Cytoplasmic side of the membrane. The helical transmembrane segment at 552-572 (LAMAYLVPLDYIFMITSGIFI) threads the bilayer. At 573-639 (QVNSLPVAFW…YSFNESNVYR (67 aa)) the chain is on the extracellular side. Residues N607 and N633 are each glycosylated (N-linked (GlcNAc...) asparagine). Residues 640-660 (NLLAMVGLYFGFHLLGYYCLW) form a helical membrane-spanning segment. The Cytoplasmic portion of the chain corresponds to 661–666 (RRARKL).

The protein belongs to the ABC transporter superfamily. ABCG family. Eye pigment precursor importer (TC 3.A.1.204) subfamily. May form a heterodimer with w/white. As to expression, expressed in the eye, specifically in primary pigment cells, secondary pigment cells and retinula cells (at protein level).

It localises to the cytoplasmic vesicle membrane. The enzyme catalyses L-kynurenine(out) + ATP + H2O = L-kynurenine(in) + ADP + phosphate + H(+). Functionally, ATP-dependent transporter of the ATP-binding cassette (ABC) family which transports various molecules including bioamines, neurotransmitters and metabolic intermediates. In the eye and probably in association with w/white, required for the transport of the eye brown pigment precursors, kynurenine and probably tryptophan, into pigment cell granules. In Malpighian tubules and pupal eyes, involved in kynurenine transport. Probably in association with w/white, plays a role in zinc storage granule biogenesis in Malpighian tubule principal epithelial cells. This is Protein scarlet from Drosophila melanogaster (Fruit fly).